Consider the following 220-residue polypeptide: Serine protease-like protein 51 (220 aa).

The first 16 residues, 1–16, serve as a signal peptide directing secretion; that stretch reads MFQLLIPLLLALKGHA. In terms of domain architecture, Peptidase S1 spans 23-220; the sequence is VQCGHRPAFP…SSKWVSSVGA (198 aa). N33 carries an N-linked (GlcNAc...) asparagine glycan. A disulfide bridge links C64 with C80. N-linked (GlcNAc...) asparagine glycosylation is present at N92. The cysteines at positions 157 and 170 are disulfide-linked.

The protein belongs to the peptidase S1 family.

The protein resides in the secreted. This chain is Serine protease-like protein 51, found in Homo sapiens (Human).